An 81-amino-acid chain; its full sequence is Cortexin-2 (81 aa).

A helical membrane pass occupies residues 29–49; sequence TGFAFVGILCIFLGLLIIRCF.

Belongs to the cortexin family.

It is found in the membrane. In Mus musculus (Mouse), this protein is Cortexin-2 (Ctxn2).